The following is a 310-amino-acid chain: Nodulation protein D 2 (310 aa).

In terms of domain architecture, HTH lysR-type spans 6–63 (LDLNLLVALDALMTERKLTAAARRVKLSQPAMSAAIARLRTYFGDELFSMQGRELIPT). Residues 23–42 (LTAAARRVKLSQPAMSAAIA) constitute a DNA-binding region (H-T-H motif).

The protein belongs to the LysR transcriptional regulatory family.

Functionally, nodD regulates the expression of the nodABCFE genes which encode other nodulation proteins. NodD is also a negative regulator of its own expression. Binds flavonoids as inducers. This chain is Nodulation protein D 2 (nodD2), found in Rhizobium meliloti (strain 1021) (Ensifer meliloti).